The primary structure comprises 294 residues: Glutamyl-Q tRNA(Asp) synthetase (294 aa).

L-glutamate contacts are provided by residues 8 to 12 (RFAPT) and Glu-44. A 'HIGH' region motif is present at residues 11–21 (PTPSGYLHFGS). Positions 100, 102, 114, and 118 each coordinate Zn(2+). 2 residues coordinate L-glutamate: Tyr-171 and Arg-189. Positions 227 to 231 (KLGKS) match the 'KMSKS' region motif. Lys-230 lines the ATP pocket.

Belongs to the class-I aminoacyl-tRNA synthetase family. GluQ subfamily. Zn(2+) serves as cofactor.

Its function is as follows. Catalyzes the tRNA-independent activation of glutamate in presence of ATP and the subsequent transfer of glutamate onto a tRNA(Asp). Glutamate is transferred on the 2-amino-5-(4,5-dihydroxy-2-cyclopenten-1-yl) moiety of the queuosine in the wobble position of the QUC anticodon. This is Glutamyl-Q tRNA(Asp) synthetase from Ectopseudomonas mendocina (strain ymp) (Pseudomonas mendocina).